We begin with the raw amino-acid sequence, 1342 residues long: Cytokinesis protein sepH (1342 aa).

Low complexity predominate over residues 1–10 (MVSRSSEGAE). Residues 1–47 (MVSRSSEGAEGPPPSAPKPPNTPAKSRLSRLGSSPSKREDKSRDDRM) are disordered. Pro residues predominate over residues 11–22 (GPPPSAPKPPNT). Basic and acidic residues predominate over residues 36–47 (SKREDKSRDDRM). One can recognise a Protein kinase domain in the interval 61 to 308 (YQLGDCLGKG…ARKLLKHPWI (248 aa)). ATP is bound by residues 67 to 75 (LGKGAFGSV) and Lys90. Asp180 (proton acceptor) is an active-site residue. Disordered stretches follow at residues 336–396 (NEAL…EEDN), 441–486 (IKSD…QLQE), and 552–591 (ADENVDPFESSPSKEAIRNRASAEDVMGQQPQLRKQISVK). A compositionally biased stretch (polar residues) spans 369-379 (KDTLPSPVSRN). A coiled-coil region spans residues 658–695 (FAQLEEGLDEMDLEANIARDKHARLRNQVEGLVSSLKT). The interval 1201–1342 (SEAYGMGKRK…QTQADADWTP (142 aa)) is disordered. Residues 1207 to 1217 (GKRKPMVRRRS) are compositionally biased toward basic residues. Composition is skewed to polar residues over residues 1218–1244 (TSATPPNLLANQSAPSTPQMNRTSQSK) and 1273–1290 (DGSTPSLTAGLNGSTGAS). A compositionally biased stretch (low complexity) spans 1315–1324 (RPSSSLSRRQ).

It belongs to the protein kinase superfamily. Ser/Thr protein kinase family. CDC7 subfamily. It depends on Mg(2+) as a cofactor.

It catalyses the reaction L-seryl-[protein] + ATP = O-phospho-L-seryl-[protein] + ADP + H(+). The catalysed reaction is L-threonyl-[protein] + ATP = O-phospho-L-threonyl-[protein] + ADP + H(+). Functionally, required for early events during cytokinesis including localization of cytoskeletal components to the cytokinetic ring. The chain is Cytokinesis protein sepH from Aspergillus terreus (strain NIH 2624 / FGSC A1156).